A 191-amino-acid polypeptide reads, in one-letter code: Protein HP-20 homolog (191 aa).

The N-terminal stretch at 1 to 16 is a signal peptide; the sequence is MADLRILVSIILMTNA. The 37-residue stretch at 22–58 folds into the Collagen-like domain; it reads GCTGPPGPPGHPGPPGIRGPPGIRGIPGLPGPPGTPG. A disordered region spans residues 22–61; the sequence is GCTGPPGPPGHPGPPGIRGPPGIRGIPGLPGPPGTPGPSV. The segment covering 26-39 has biased composition (pro residues); the sequence is PPGPPGHPGPPGIR. Residues 64–191 enclose the C1q domain; sequence PCHRQSAFTV…VTIYFSGFLT (128 aa).

The protein localises to the secreted. The sequence is that of Protein HP-20 homolog from Bos taurus (Bovine).